The sequence spans 540 residues: Glucose-6-phosphate isomerase (540 aa).

Glu350 acts as the Proton donor in catalysis. Residues His381 and Lys503 contribute to the active site.

This sequence belongs to the GPI family.

It is found in the cytoplasm. The enzyme catalyses alpha-D-glucose 6-phosphate = beta-D-fructose 6-phosphate. It functions in the pathway carbohydrate biosynthesis; gluconeogenesis. Its pathway is carbohydrate degradation; glycolysis; D-glyceraldehyde 3-phosphate and glycerone phosphate from D-glucose: step 2/4. Catalyzes the reversible isomerization of glucose-6-phosphate to fructose-6-phosphate. This is Glucose-6-phosphate isomerase from Paraburkholderia phytofirmans (strain DSM 17436 / LMG 22146 / PsJN) (Burkholderia phytofirmans).